We begin with the raw amino-acid sequence, 538 residues long: Phosphoenolpyruvate carboxykinase (ATP) (538 aa).

Substrate contacts are provided by R64, Y205, and K211. ATP-binding positions include K211, H230, and 246 to 254 (GLSGTGKTT). Residues K211 and H230 each coordinate Mn(2+). D267 provides a ligand contact to Mn(2+). Residues E295, R331, 447–448 (RI), and T453 each bind ATP. R331 provides a ligand contact to substrate.

It belongs to the phosphoenolpyruvate carboxykinase (ATP) family. In terms of assembly, monomer. Mn(2+) serves as cofactor.

The protein resides in the cytoplasm. The catalysed reaction is oxaloacetate + ATP = phosphoenolpyruvate + ADP + CO2. Its pathway is carbohydrate biosynthesis; gluconeogenesis. Functionally, involved in the gluconeogenesis. Catalyzes the conversion of oxaloacetate (OAA) to phosphoenolpyruvate (PEP) through direct phosphoryl transfer between the nucleoside triphosphate and OAA. In Haemophilus influenzae (strain 86-028NP), this protein is Phosphoenolpyruvate carboxykinase (ATP).